The primary structure comprises 159 residues: Globin CTT-W (159 aa).

A signal peptide spans Met-1–Ala-16. The 143-residue stretch at His-17–Glu-159 folds into the Globin domain. Residues His-73 and His-108 each coordinate heme b.

The protein belongs to the globin family.

The chain is Globin CTT-W (CTT-W) from Chironomus thummi piger (Midge).